Reading from the N-terminus, the 75-residue chain is Movement protein TGBp3 (75 aa).

At 1 to 2 (MR) the chain is on the lumenal side. A helical membrane pass occupies residues 3 to 23 (VLDLILALITAAVVGYTIALV). At 24–75 (SNSGCYVHFDGRSATTTCPPGPWVESIANGLYTAGLARPHPEPECERRQSSW) the chain is on the cytoplasmic side.

This sequence belongs to the Tymovirales TGBp3 protein family.

It is found in the host endoplasmic reticulum membrane. Its function is as follows. Plays a role in viral cell-to-cell propagation, by facilitating genome transport to neighboring plant cells through plasmosdesmata. May induce the formation of granular vesicles derived from the Endoplasmic reticulum, which align on actin filaments. The chain is Movement protein TGBp3 from Strawberry mild yellow edge-associated virus (SMYEaV).